A 22-amino-acid polypeptide reads, in one-letter code: Dioicin-1 (22 aa).

Its subcellular location is the secreted. It localises to the extracellular space. The protein resides in the golgi apparatus. It is found in the vacuole. The catalysed reaction is Endohydrolysis of the N-glycosidic bond at one specific adenosine on the 28S rRNA.. Functionally, nicks pBR322 dsDNA. Has adenine polynucleotide glycosidase activity on herring sperm ssDNA. This chain is Dioicin-1, found in Phytolacca dioica (Bella sombra tree).